Reading from the N-terminus, the 65-residue chain is Large ribosomal subunit protein uL29 (65 aa).

Belongs to the universal ribosomal protein uL29 family.

This Buchnera aphidicola subsp. Schizaphis graminum (strain Sg) protein is Large ribosomal subunit protein uL29.